Here is a 320-residue protein sequence, read N- to C-terminus: MTDTRKSPEPGVKLRAADKVARIPVKIAPTEKPLRKPAWIRARTHGSPEVQRLKRVLREQRLHTVCEEASCPNLGECFGHGTATFMIMGDICTRRCPFCDVAHGRPEPLDAEEPENLARTIAAMGLRYVVITSVDRDDLRDGGARHFVDCIRTTRAHSPDIRIEILVPDFRGRMDVALAILNEAPPDVFNHNLETVPRLYREARPGSDYDWSLDLIQRFKETHPQVPTKSGLMLGLGEEMHEVEAVMRDLRDHGCDMLTLGQYLQPSLHHLPVKRYVTPEEFDRLAEIGYAMGFSQVASGPMVRSSYHADQQAQKVIPEG.

Positions 66, 71, 77, 92, 96, 99, and 306 each coordinate [4Fe-4S] cluster. The 219-residue stretch at 77–295 (CFGHGTATFM…AEIGYAMGFS (219 aa)) folds into the Radical SAM core domain.

The protein belongs to the radical SAM superfamily. Lipoyl synthase family. The cofactor is [4Fe-4S] cluster.

The protein resides in the cytoplasm. It carries out the reaction [[Fe-S] cluster scaffold protein carrying a second [4Fe-4S](2+) cluster] + N(6)-octanoyl-L-lysyl-[protein] + 2 oxidized [2Fe-2S]-[ferredoxin] + 2 S-adenosyl-L-methionine + 4 H(+) = [[Fe-S] cluster scaffold protein] + N(6)-[(R)-dihydrolipoyl]-L-lysyl-[protein] + 4 Fe(3+) + 2 hydrogen sulfide + 2 5'-deoxyadenosine + 2 L-methionine + 2 reduced [2Fe-2S]-[ferredoxin]. It participates in protein modification; protein lipoylation via endogenous pathway; protein N(6)-(lipoyl)lysine from octanoyl-[acyl-carrier-protein]: step 2/2. Its function is as follows. Catalyzes the radical-mediated insertion of two sulfur atoms into the C-6 and C-8 positions of the octanoyl moiety bound to the lipoyl domains of lipoate-dependent enzymes, thereby converting the octanoylated domains into lipoylated derivatives. This Thioalkalivibrio sulfidiphilus (strain HL-EbGR7) protein is Lipoyl synthase.